The chain runs to 577 residues: Aspartate--tRNA ligase (577 aa).

Glu169 provides a ligand contact to L-aspartate. Residues 193 to 196 (QLYK) are aspartate. L-aspartate is bound at residue Arg215. Residues 215–217 (RDE) and Gln224 each bind ATP. His440 is an L-aspartate binding site. Glu474 provides a ligand contact to ATP. Arg481 is an L-aspartate binding site. 526–529 (GIDR) contributes to the ATP binding site.

Belongs to the class-II aminoacyl-tRNA synthetase family. Type 1 subfamily. As to quaternary structure, homodimer.

Its subcellular location is the cytoplasm. It catalyses the reaction tRNA(Asp) + L-aspartate + ATP = L-aspartyl-tRNA(Asp) + AMP + diphosphate. Functionally, catalyzes the attachment of L-aspartate to tRNA(Asp) in a two-step reaction: L-aspartate is first activated by ATP to form Asp-AMP and then transferred to the acceptor end of tRNA(Asp). The sequence is that of Aspartate--tRNA ligase from Mesoplasma florum (strain ATCC 33453 / NBRC 100688 / NCTC 11704 / L1) (Acholeplasma florum).